Here is a 250-residue protein sequence, read N- to C-terminus: Cell division protein ZapD (250 aa).

It belongs to the ZapD family. Interacts with FtsZ.

It is found in the cytoplasm. Its function is as follows. Cell division factor that enhances FtsZ-ring assembly. Directly interacts with FtsZ and promotes bundling of FtsZ protofilaments, with a reduction in FtsZ GTPase activity. This is Cell division protein ZapD from Serratia proteamaculans (strain 568).